Reading from the N-terminus, the 82-residue chain is Small ribosomal subunit protein uS17 (82 aa).

Belongs to the universal ribosomal protein uS17 family. In terms of assembly, part of the 30S ribosomal subunit.

In terms of biological role, one of the primary rRNA binding proteins, it binds specifically to the 5'-end of 16S ribosomal RNA. In Azorhizobium caulinodans (strain ATCC 43989 / DSM 5975 / JCM 20966 / LMG 6465 / NBRC 14845 / NCIMB 13405 / ORS 571), this protein is Small ribosomal subunit protein uS17.